The primary structure comprises 226 residues: MSRPGLFISFEGIDGAGKSSHVEGLAAAFRAQGRRVTVSREPGGTPLAEKLRALLLAERMDALTESLLIFAARRDHLRQVIEPALARGDVVLCDRFTDSTFAYQGAGRGFDHETLSILERMTNTAAAHKDGLLPEPELTLWFDLAPELAAERMAGAAHRPDRFEAQPVEFFRRVARGYADRAAAAPRRIVRIDAAQECHRVRQQLRDALVCKGWLAPMVTPQGGAQ.

An ATP-binding site is contributed by 12–19; the sequence is GIDGAGKS.

This sequence belongs to the thymidylate kinase family.

It carries out the reaction dTMP + ATP = dTDP + ADP. Phosphorylation of dTMP to form dTDP in both de novo and salvage pathways of dTTP synthesis. This Verminephrobacter eiseniae (strain EF01-2) protein is Thymidylate kinase.